Reading from the N-terminus, the 746-residue chain is Eukaryotic translation initiation factor 3 subunit B (746 aa).

A compositionally biased stretch (basic and acidic residues) spans 1–11 (MAPSYEHLREA). The tract at residues 1-20 (MAPSYEHLREADLDEDEFDE) is disordered. The 87-residue stretch at 42-128 (TFVVIDGLPE…HTLRVNKLMD (87 aa)) folds into the RRM domain. 7 WD repeats span residues 195-234 (DRPN…RLGR), 247-294 (PQEN…RSFA), 307-346 (PRKH…LLDK), 349-386 (IKVE…IGSN), 458-500 (TIKD…FFCP), 517-560 (LDKR…EKPE), and 575-620 (ADHY…LREE).

This sequence belongs to the eIF-3 subunit B family. In terms of assembly, component of the eukaryotic translation initiation factor 3 (eIF-3) complex.

The protein resides in the cytoplasm. Its function is as follows. RNA-binding component of the eukaryotic translation initiation factor 3 (eIF-3) complex, which is involved in protein synthesis of a specialized repertoire of mRNAs and, together with other initiation factors, stimulates binding of mRNA and methionyl-tRNAi to the 40S ribosome. The eIF-3 complex specifically targets and initiates translation of a subset of mRNAs involved in cell proliferation. The polypeptide is Eukaryotic translation initiation factor 3 subunit B (Pyricularia oryzae (strain 70-15 / ATCC MYA-4617 / FGSC 8958) (Rice blast fungus)).